A 450-amino-acid chain; its full sequence is Beclin-1 (450 aa).

Methionine 1 carries the post-translational modification N-acetylmethionine. Serine 15 and serine 30 each carry phosphoserine. A disordered region spans residues 48–72 (TTAQAKPGETQEEETNSGEEPFIET). 3 positions are modified to phosphoserine; by AMPK: serine 90, serine 93, and serine 96. The BH3 signature appears at 108–127 (TMENLSRRLKVTGDLFDIMS). Residues 112-159 (LSRRLKVTGDLFDIMSGQTDVDHPLCEECTDTLLDQLDTQLNVTENEC) form an interaction with BCL2 and BCL2L1 isoform Bcl-X(L) region. Threonine 119 bears the Phosphothreonine; by DAPK1 mark. A coiled-coil region spans residues 142-270 (DTLLDQLDTQ…LDKLKKTNVF (129 aa)). The interval 245 to 450 (DELKSVENQM…AWVSSQFYNK (206 aa)) is evolutionary conserved domain (ECD). Glycyl lysine isopeptide (Lys-Gly) (interchain with G-Cter in ubiquitin) cross-links involve residues lysine 402 and lysine 437. The interval 425 to 450 (WTKALKFMLTNLKWGLAWVSSQFYNK) is required for membrane-association.

This sequence belongs to the beclin family. As to quaternary structure, a homodimeric form is proposed to exist; this metastable form readily transits to ATG14- or UVRAG-containing complexes with BECN1:UVRAG being more stable than BECN1:ATG14. Component of the PI3K (PI3KC3/PI3K-III/class III phosphatidylinositol 3-kinase) complex the core of which is composed of the catalytic subunit PIK3C3, the regulatory subunit PIK3R4 and BECN1 associating with additional regulatory/auxiliary subunits to form alternative complex forms. Alternative complex forms containing a fourth regulatory subunit in a mutually exclusive manner are PI3K complex I (PI3KC3-C1) containing ATG14, and PI3K complex II (PI3KC3-C2) containing UVRAG. PI3KC3-C1 displays a V-shaped architecture with PIK3R4 serving as a bridge between PIK3C3 and the ATG14:BECN1 subcomplex. Both, PI3KC3-C1 and PI3KC3-C2, can associate with further regulatory subunits, such as RUBCN, SH3GLB1/Bif-1 and AMBRA1. PI3KC3-C1 probably associates with PIK3CB. Forms a complex with PPP2CA and AMBRA1; AMBRA1 and BECN1 components of the complex regulate MYC stability via different pathways. Component of the complex, at least composed of LRPPRC, BECN1 and BCL2; the interactions prevent BECN1 from forming an autophagy-inducing complex with PIK3C3. Interacts with AMBRA1, GOPC, GRID2. Interacts with BCL2 and BCL2L1 isoform Bcl-X(L); the interaction inhibits BECN1 function in promoting autophagy by interfering with the formation of the PI3K complex. Interacts with cytosolic HMGB1; inhibits the interaction of BECN1 and BCL2 leading to promotion of autophagy. Interacts with USP10, USP13, VMP1, DAPK1, RAB39A. Interacts with the poly-Gln domain of ATXN3; the interaction causes deubiquitination at Lys-402 and stabilizes BECN1. Interacts with SLAMF1. Interacts with TRIM5; the interaction causes activation of BECN1 by causing its dissociation from its inhibitors BCL2 and TAB2. Interacts with active ULK1 (phosphorylated on 'Ser-317') and MEFV simultaneously. Interacts with WDR81 and WDR91; negatively regulates the PI3 kinase/PI3K activity associated with endosomal membranes. Interacts with LAPTM4B; competes with EGFR for LAPTM4B binding; regulates EGFR activity. Interacts with TRIM50. Interacts with TRIM16. Interacts with ATG14; this interaction is increased in the absence of TMEM39A. Interacts with WASHC1; preventing interaction with AMBRA1 and the DCX(AMBRA1) complex and subsequent ubiquitination. Interacts with TRIM17. Interacts with BCL2L10/BCL-B (via BH1 domain). Interacts with SH3BGRL. Interacts with IRGM; enhancing BECN1-interacting partners and influencing the composition of the BECN1 complex. Interacts with ARMC3. Interacts with LRPPRC. (Microbial infection) Interacts with human cytomegalovirus/HHV-5 protein TRS1. In terms of assembly, (Microbial infection) Interacts with murine gammaherpesvirus 68 M11. As to quaternary structure, (Microbial infection) Interacts with herpes simplex virus 1 (HHV-1) protein ICP34.5; this interaction antagonizes the host autophagy response. (Microbial infection) Interacts with Epstein-Barr virus protein BHRF1; this interaction inhibits BECN1-mediated autophagy induction. Phosphorylation at Thr-119 by DAPK1 reduces its interaction with BCL2 and BCL2L1 and promotes induction of autophagy. In response to autophagic stimuli, phosphorylated at serine residues by AMPK in an ATG14-dependent manner, and this phosphorylation is critical for maximally efficient autophagy. In terms of processing, polyubiquitinated by NEDD4, both with 'Lys-11'- and 'Lys-63'-linkages. 'Lys-11'-linked polyubiquitination leads to degradation and is enhanced when the stabilizing interaction partner VPS34 is depleted. Deubiquitinated by USP10 and USP13, leading to stabilize the PIK3C3/VPS34-containing complexes. Polyubiquitinated at Lys-402 with 'Lys-48'-linkages. 'Lys-48'-linked polyubiquitination of Lys-402 leads to degradation. Deubiquitinated by ATXN3, leading to stabilization. Ubiquitinated at Lys-437 via 'Lys-63'-linkage by the DCX(AMBRA1) complex, thereby increasing the association between BECN1 and PIK3C3 to promote PIK3C3 activity. 'Lys-48'-linked ubiquitination by RNF216 leads to proteasomal degradation and autophagy inhibition. Post-translationally, proteolytically processed by caspases including CASP8 and CASP3; the C-terminal fragments lack autophagy-inducing capacity and are proposed to induce apoptosis. Thus the cleavage is proposed to be an determinant to switch from autophagy to apoptosis pathways affecting cellular homeostasis including viral infections and survival of tumor cells. As to expression, ubiquitous.

The protein localises to the cytoplasm. It is found in the golgi apparatus. Its subcellular location is the trans-Golgi network membrane. The protein resides in the endosome membrane. It localises to the endoplasmic reticulum membrane. The protein localises to the mitochondrion membrane. It is found in the endosome. Its subcellular location is the cytoplasmic vesicle. The protein resides in the autophagosome. It localises to the mitochondrion. The protein localises to the nucleus. Its function is as follows. Plays a central role in autophagy. Acts as a core subunit of the PI3K complex that mediates formation of phosphatidylinositol 3-phosphate; different complex forms are believed to play a role in multiple membrane trafficking pathways: PI3KC3-C1 is involved in initiation of autophagosomes and PI3KC3-C2 in maturation of autophagosomes and endocytosis. Involved in regulation of degradative endocytic trafficking and required for the abscission step in cytokinesis, probably in the context of PI3KC3-C2. Essential for the formation of PI3KC3-C2 but not PI3KC3-C1 PI3K complex forms. Involved in endocytosis. May play a role in antiviral host defense. Beclin-1-C 35 kDa localized to mitochondria can promote apoptosis; it induces the mitochondrial translocation of BAX and the release of proapoptotic factors. Functionally, (Microbial infection) Protects against infection by a neurovirulent strain of Sindbis virus. The chain is Beclin-1 (BECN1) from Homo sapiens (Human).